Here is a 191-residue protein sequence, read N- to C-terminus: UPF0302 protein SA1295 (191 aa).

Belongs to the UPF0302 family.

This is UPF0302 protein SA1295 from Staphylococcus aureus (strain N315).